The sequence spans 527 residues: UPF0053 protein YegH (527 aa).

The next 5 membrane-spanning stretches (helical) occupy residues Ile-14–Leu-34, Leu-51–Leu-71, Phe-81–Ala-101, Ile-145–Ile-165, and Ile-185–Phe-205. 2 CBS domains span residues Met-306–Leu-366 and Leu-371–Val-429.

Belongs to the UPF0053 family.

It localises to the cell membrane. This chain is UPF0053 protein YegH (yegH), found in Escherichia coli (strain K12).